A 379-amino-acid polypeptide reads, in one-letter code: Queuine tRNA-ribosyltransferase (379 aa).

Residue Asp94 is the Proton acceptor of the active site. Substrate contacts are provided by residues 94 to 98, Asp148, Gln191, and Gly218; that span reads DSGGF. The segment at 249–255 is RNA binding; it reads GVGSPDA. Catalysis depends on Asp268, which acts as the Nucleophile. Residues 273–277 form an RNA binding; important for wobble base 34 recognition region; the sequence is TRIAR. The Zn(2+) site is built by Cys306, Cys308, Cys311, and His337.

It belongs to the queuine tRNA-ribosyltransferase family. In terms of assembly, homodimer. Within each dimer, one monomer is responsible for RNA recognition and catalysis, while the other monomer binds to the replacement base PreQ1. The cofactor is Zn(2+).

The catalysed reaction is 7-aminomethyl-7-carbaguanine + guanosine(34) in tRNA = 7-aminomethyl-7-carbaguanosine(34) in tRNA + guanine. It participates in tRNA modification; tRNA-queuosine biosynthesis. In terms of biological role, catalyzes the base-exchange of a guanine (G) residue with the queuine precursor 7-aminomethyl-7-deazaguanine (PreQ1) at position 34 (anticodon wobble position) in tRNAs with GU(N) anticodons (tRNA-Asp, -Asn, -His and -Tyr). Catalysis occurs through a double-displacement mechanism. The nucleophile active site attacks the C1' of nucleotide 34 to detach the guanine base from the RNA, forming a covalent enzyme-RNA intermediate. The proton acceptor active site deprotonates the incoming PreQ1, allowing a nucleophilic attack on the C1' of the ribose to form the product. After dissociation, two additional enzymatic reactions on the tRNA convert PreQ1 to queuine (Q), resulting in the hypermodified nucleoside queuosine (7-(((4,5-cis-dihydroxy-2-cyclopenten-1-yl)amino)methyl)-7-deazaguanosine). This chain is Queuine tRNA-ribosyltransferase, found in Macrococcus caseolyticus (strain JCSC5402) (Macrococcoides caseolyticum).